Consider the following 530-residue polypeptide: Phosphoenolpyruvate carboxykinase (ATP) (530 aa).

Positions 58, 195, and 201 each coordinate substrate. ATP is bound by residues Lys-201, His-220, and 236-244 (GLSGTGKTT). Positions 201 and 220 each coordinate Mn(2+). Position 257 (Asp-257) interacts with Mn(2+). ATP is bound by residues Glu-285, Arg-321, 440–441 (RI), and Thr-446. Arg-321 is a substrate binding site.

The protein belongs to the phosphoenolpyruvate carboxykinase (ATP) family. The cofactor is Mn(2+).

The protein resides in the cytoplasm. It catalyses the reaction oxaloacetate + ATP = phosphoenolpyruvate + ADP + CO2. The protein operates within carbohydrate biosynthesis; gluconeogenesis. Its function is as follows. Involved in the gluconeogenesis. Catalyzes the conversion of oxaloacetate (OAA) to phosphoenolpyruvate (PEP) through direct phosphoryl transfer between the nucleoside triphosphate and OAA. In Staphylococcus aureus (strain MSSA476), this protein is Phosphoenolpyruvate carboxykinase (ATP).